We begin with the raw amino-acid sequence, 331 residues long: DNA-directed RNA polymerase subunit alpha (331 aa).

Residues 1–223 form an alpha N-terminal domain (alpha-NTD) region; that stretch reads MDQKRPQLKA…DELTVFGNVE (223 aa). An alpha C-terminal domain (alpha-CTD) region spans residues 260-331; the sequence is PYPADLDTPR…LAQFGLALRD (72 aa).

This sequence belongs to the RNA polymerase alpha chain family. Homodimer. The RNAP catalytic core consists of 2 alpha, 1 beta, 1 beta' and 1 omega subunit. When a sigma factor is associated with the core the holoenzyme is formed, which can initiate transcription.

It carries out the reaction RNA(n) + a ribonucleoside 5'-triphosphate = RNA(n+1) + diphosphate. Functionally, DNA-dependent RNA polymerase catalyzes the transcription of DNA into RNA using the four ribonucleoside triphosphates as substrates. This is DNA-directed RNA polymerase subunit alpha from Deinococcus geothermalis (strain DSM 11300 / CIP 105573 / AG-3a).